The following is a 452-amino-acid chain: D-inositol 3-phosphate glycosyltransferase (452 aa).

Residue histidine 25 participates in 1D-myo-inositol 3-phosphate binding. UDP-N-acetyl-alpha-D-glucosamine-binding positions include glutamine 31–proline 32 and glycine 39. 1D-myo-inositol 3-phosphate is bound by residues aspartate 36 to asparagine 41, lysine 94, tyrosine 127, threonine 151, and arginine 171. UDP-N-acetyl-alpha-D-glucosamine contacts are provided by arginine 245, lysine 250, and glutamine 309. Mg(2+) contacts are provided by tyrosine 318, arginine 319, and serine 321. Glutamate 331 and glutamate 339 together coordinate UDP-N-acetyl-alpha-D-glucosamine. Threonine 345 contributes to the Mg(2+) binding site.

Belongs to the glycosyltransferase group 1 family. MshA subfamily. In terms of assembly, homodimer.

It catalyses the reaction 1D-myo-inositol 3-phosphate + UDP-N-acetyl-alpha-D-glucosamine = 1D-myo-inositol 2-acetamido-2-deoxy-alpha-D-glucopyranoside 3-phosphate + UDP + H(+). In terms of biological role, catalyzes the transfer of a N-acetyl-glucosamine moiety to 1D-myo-inositol 3-phosphate to produce 1D-myo-inositol 2-acetamido-2-deoxy-glucopyranoside 3-phosphate in the mycothiol biosynthesis pathway. The sequence is that of D-inositol 3-phosphate glycosyltransferase from Rhodococcus jostii (strain RHA1).